Here is a 106-residue protein sequence, read N- to C-terminus: uncharacterized protein (106 aa).

The HTH hxlR-type domain maps to M1–I93.

This is an uncharacterized protein from Methanocaldococcus jannaschii (strain ATCC 43067 / DSM 2661 / JAL-1 / JCM 10045 / NBRC 100440) (Methanococcus jannaschii).